The primary structure comprises 120 residues: Glycine cleavage system H protein (120 aa).

A Lipoyl-binding domain is found at 17–99 (VATVGITEHA…QGAAWFFKLK (83 aa)). Residue Lys58 is modified to N6-lipoyllysine.

Belongs to the GcvH family. As to quaternary structure, the glycine cleavage system is composed of four proteins: P, T, L and H. (R)-lipoate is required as a cofactor.

The glycine cleavage system catalyzes the degradation of glycine. The H protein shuttles the methylamine group of glycine from the P protein to the T protein. This Sinorhizobium fredii (strain NBRC 101917 / NGR234) protein is Glycine cleavage system H protein.